The chain runs to 340 residues: Maltose epimerase (340 aa).

A substrate-binding site is contributed by Arg-79. His-178 (proton donor) is an active-site residue. Asp-247 lines the substrate pocket. Glu-305 serves as the catalytic Proton acceptor.

It belongs to the aldose epimerase family.

It carries out the reaction alpha-maltose = beta-maltose. The protein operates within carbohydrate metabolism; hexose metabolism. Catalyzes the interconversion of alpha and beta anomers of maltose. The chain is Maltose epimerase from Levilactobacillus brevis (strain ATCC 367 / BCRC 12310 / CIP 105137 / JCM 1170 / LMG 11437 / NCIMB 947 / NCTC 947) (Lactobacillus brevis).